Consider the following 78-residue polypeptide: Hainantoxin-XX.3 (78 aa).

An N-terminal signal peptide occupies residues 1-23 (MKSATLLALSFLLIASCFLICEA). A propeptide spanning residues 24–47 (EHSRYEEHEILEENMGDVVNLEQR) is cleaved from the precursor. Disulfide bonds link C49–C62, C56–C66, and C61–C77.

It belongs to the hainantoxin family. 20 subfamily. In terms of tissue distribution, expressed by the venom gland.

It localises to the secreted. In terms of biological role, putative ion channel inhibitor. This chain is Hainantoxin-XX.3, found in Cyriopagopus hainanus (Chinese bird spider).